We begin with the raw amino-acid sequence, 487 residues long: Glutamate--tRNA ligase (487 aa).

Positions 13–23 (PSPTGLFHIGG) match the 'HIGH' region motif. The 'KMSKS' region motif lies at 255-259 (KLSKR). Lys-258 serves as a coordination point for ATP.

It belongs to the class-I aminoacyl-tRNA synthetase family. Glutamate--tRNA ligase type 1 subfamily. In terms of assembly, monomer.

It is found in the cytoplasm. The catalysed reaction is tRNA(Glu) + L-glutamate + ATP = L-glutamyl-tRNA(Glu) + AMP + diphosphate. Functionally, catalyzes the attachment of glutamate to tRNA(Glu) in a two-step reaction: glutamate is first activated by ATP to form Glu-AMP and then transferred to the acceptor end of tRNA(Glu). This Malacoplasma penetrans (strain HF-2) (Mycoplasma penetrans) protein is Glutamate--tRNA ligase.